Reading from the N-terminus, the 258-residue chain is Imidazole glycerol phosphate synthase subunit HisF (258 aa).

Residues D11 and D130 contribute to the active site.

It belongs to the HisA/HisF family. In terms of assembly, heterodimer of HisH and HisF.

Its subcellular location is the cytoplasm. It catalyses the reaction 5-[(5-phospho-1-deoxy-D-ribulos-1-ylimino)methylamino]-1-(5-phospho-beta-D-ribosyl)imidazole-4-carboxamide + L-glutamine = D-erythro-1-(imidazol-4-yl)glycerol 3-phosphate + 5-amino-1-(5-phospho-beta-D-ribosyl)imidazole-4-carboxamide + L-glutamate + H(+). It functions in the pathway amino-acid biosynthesis; L-histidine biosynthesis; L-histidine from 5-phospho-alpha-D-ribose 1-diphosphate: step 5/9. Functionally, IGPS catalyzes the conversion of PRFAR and glutamine to IGP, AICAR and glutamate. The HisF subunit catalyzes the cyclization activity that produces IGP and AICAR from PRFAR using the ammonia provided by the HisH subunit. In Escherichia coli O6:K15:H31 (strain 536 / UPEC), this protein is Imidazole glycerol phosphate synthase subunit HisF.